A 40-amino-acid chain; its full sequence is Spodomicin (40 aa).

Disulfide bonds link cysteine 6–cysteine 20, cysteine 10–cysteine 32, and cysteine 21–cysteine 39.

In terms of assembly, monomer. In terms of processing, contains three disulfide bonds. In terms of tissue distribution, hemolymph.

It is found in the secreted. Fungicide. The chain is Spodomicin from Spodoptera littoralis (Egyptian cotton leafworm).